The sequence spans 393 residues: Cysteine protease ATG4B (393 aa).

Position 1 is an N-acetylmethionine (methionine 1). Residue serine 34 is modified to Phosphoserine; by PKB/AKT1 and PKB/AKT2. Cysteine 74 (nucleophile) is an active-site residue. Cysteine 189 is subject to S-nitrosocysteine. Residues aspartate 278 and histidine 280 contribute to the active site. 2 positions are modified to S-nitrosocysteine: cysteine 292 and cysteine 301. Cysteine 292 and cysteine 361 are disulfide-bonded. A Phosphoserine; by ULK1 modification is found at serine 316. Phosphoserine; by STK26 is present on serine 383. The LIR motif lies at 388–391; sequence FEIL. The residue at position 392 (serine 392) is a Phosphoserine.

This sequence belongs to the peptidase C54 family. Interacts with PFKP; promoting phosphorylation of ATG4B at Ser-34. Interacts with GBP7. Phosphorylation at Ser-383 and Ser-392 promotes autophagy by increasing protein delipidation activity without affecting proteolytic activation of ATG8 proteins. Phosphorylation at Ser-316 by ULK1 inhibits autophagy by decreasing both proteolytic activation and delipidation activities. Phosphorylation at Ser-316 is dephosphorylated by protein phosphatase 2A (PP2A). Phosphorylation at Ser-34 by AKT2 promotes its hydrolase activity, leading to increased proteolytic activation and delipidation of ATG8 family proteins. Phosphorylation at Ser-34 by AKT1 promotes mitochondrial localization and inhibition of the F1F0-ATP synthase activity, leading to elevation of mitochondrial reactive oxygen species (ROS). In terms of processing, ubiquitinated by RNF5, leading to its degradation by the proteasome. Post-translationally, S-nitrosylation at Cys-189 and Cys-292 in response to high glucose decreases both proteolytic activation and delipidation activities. O-glycosylated by OGT, leading to increase protease activity, thereby promoting the proteolytic activation of ATG8 family proteins. In terms of processing, forms reversible intrachain disulfide bonds in response to oxidative stress. Forms interchain disulfide bonds, leading to formation of homooligomers in response to oxidation.

It localises to the cytoplasm. The protein localises to the cytosol. The protein resides in the cytoplasmic vesicle. It is found in the autophagosome. Its subcellular location is the endoplasmic reticulum. It localises to the mitochondrion. The enzyme catalyses [protein]-C-terminal L-amino acid-glycyl-phosphatidylethanolamide + H2O = [protein]-C-terminal L-amino acid-glycine + a 1,2-diacyl-sn-glycero-3-phosphoethanolamine. The catalysed reaction is [protein]-C-terminal L-amino acid-glycyl-phosphatidylserine + H2O = [protein]-C-terminal L-amino acid-glycine + a 1,2-diacyl-sn-glycero-3-phospho-L-serine. Inhibited by N-ethylmaleimide. Redox-regulated during autophagy since reducing conditions activate ATG4A whereas an oxidizing environment such as the presence of H(2)O(2) inhibits its activity. The cysteine protease activity compounds is inhibited by styrylquinoline compounds 4-28 and LV-320. Cysteine protease that plays a key role in autophagy by mediating both proteolytic activation and delipidation of ATG8 family proteins. Required for canonical autophagy (macroautophagy), non-canonical autophagy as well as for mitophagy. The protease activity is required for proteolytic activation of ATG8 family proteins: cleaves the C-terminal amino acid of ATG8 proteins MAP1LC3A, MAP1LC3B, MAP1LC3C, GABARAPL1, GABARAPL2 and GABARAP, to reveal a C-terminal glycine. Exposure of the glycine at the C-terminus is essential for ATG8 proteins conjugation to phosphatidylethanolamine (PE) and insertion to membranes, which is necessary for autophagy. Protease activity is also required to counteract formation of high-molecular weight conjugates of ATG8 proteins (ATG8ylation): acts as a deubiquitinating-like enzyme that removes ATG8 conjugated to other proteins, such as ATG3. In addition to the protease activity, also mediates delipidation of ATG8 family proteins. Catalyzes delipidation of PE-conjugated forms of ATG8 proteins during macroautophagy. Also involved in non-canonical autophagy, a parallel pathway involving conjugation of ATG8 proteins to single membranes at endolysosomal compartments, by catalyzing delipidation of ATG8 proteins conjugated to phosphatidylserine (PS). Compared to other members of the family (ATG4A, ATG4C or ATG4C), constitutes the major protein for proteolytic activation of ATG8 proteins, while it displays weaker delipidation activity than other ATG4 paralogs. Involved in phagophore growth during mitophagy independently of its protease activity and of ATG8 proteins: acts by regulating ATG9A trafficking to mitochondria and promoting phagophore-endoplasmic reticulum contacts during the lipid transfer phase of mitophagy. The chain is Cysteine protease ATG4B from Homo sapiens (Human).